A 115-amino-acid chain; its full sequence is uncharacterized protein (115 aa).

Residues 1–115 (MGVEISLDPP…ETVIKLSAAE (115 aa)) enclose the MSP domain.

This is an uncharacterized protein from Caenorhabditis elegans.